The sequence spans 90 residues: Small ribosomal subunit protein uS15c (90 aa).

The protein belongs to the universal ribosomal protein uS15 family. As to quaternary structure, part of the 30S ribosomal subunit.

It localises to the plastid. It is found in the chloroplast. The protein is Small ribosomal subunit protein uS15c (rps15-A) of Brachypodium distachyon (Purple false brome).